Reading from the N-terminus, the 147-residue chain is Hemoglobin subunit delta (147 aa).

In terms of domain architecture, Globin spans 3-147; sequence HLTGEEKAAV…VANALAHKYH (145 aa). 2 residues coordinate heme b: His-64 and His-93.

Belongs to the globin family. In terms of assembly, heterotetramer of two delta chains and two alpha chains. In terms of tissue distribution, red blood cells.

The protein is Hemoglobin subunit delta (HBD) of Ailuropoda melanoleuca (Giant panda).